The following is a 502-amino-acid chain: Probable malate:quinone oxidoreductase (502 aa).

Belongs to the MQO family. The cofactor is FAD.

It carries out the reaction (S)-malate + a quinone = a quinol + oxaloacetate. It functions in the pathway carbohydrate metabolism; tricarboxylic acid cycle; oxaloacetate from (S)-malate (quinone route): step 1/1. This is Probable malate:quinone oxidoreductase from Synechococcus sp. (strain CC9605).